Reading from the N-terminus, the 165-residue chain is uncharacterized protein (165 aa).

This is an uncharacterized protein from Saccharomyces cerevisiae (strain ATCC 204508 / S288c) (Baker's yeast).